The following is a 264-amino-acid chain: 3-methyl-2-oxobutanoate hydroxymethyltransferase (264 aa).

The Mg(2+) site is built by Asp44 and Asp83. 3-methyl-2-oxobutanoate-binding positions include 44–45, Asp83, and Lys111; that span reads DS. Glu113 provides a ligand contact to Mg(2+). The active-site Proton acceptor is Glu180.

Belongs to the PanB family. As to quaternary structure, homodecamer; pentamer of dimers. The cofactor is Mg(2+).

Its subcellular location is the cytoplasm. It catalyses the reaction 3-methyl-2-oxobutanoate + (6R)-5,10-methylene-5,6,7,8-tetrahydrofolate + H2O = 2-dehydropantoate + (6S)-5,6,7,8-tetrahydrofolate. Its pathway is cofactor biosynthesis; (R)-pantothenate biosynthesis; (R)-pantoate from 3-methyl-2-oxobutanoate: step 1/2. In terms of biological role, catalyzes the reversible reaction in which hydroxymethyl group from 5,10-methylenetetrahydrofolate is transferred onto alpha-ketoisovalerate to form ketopantoate. The protein is 3-methyl-2-oxobutanoate hydroxymethyltransferase of Marinobacter nauticus (strain ATCC 700491 / DSM 11845 / VT8) (Marinobacter aquaeolei).